A 426-amino-acid chain; its full sequence is MNALNIVEYTHNLGVQAKVASAQMARASAAVKSRALLALARLLRENVEPLQTDNARDLDRAVANGLSAPMVDRLRLTPKVLETCAQGCEQLASMADVIGEIIGMKQMPSGIRVGQMRVPIGVFGMIYESRPNVTIEAASLSIKSGNACILRGGSEAIDSNKALAALVARALAEAGLPEHGVQLVQTTDREAVGQLIAMPDYVDVIIPRGGKGLIERISREAKVPVIKHLDGNCHTYVDDPCDIAMAVKVADNAKTNKYSPCNASESLLVARGVAAEFLPQIGAIYAAKGVEMRGCPESLAILKSVAGAQLAEATEQDWSEEYLAPIISVKIVAGVDEAIAHINRYSSHHTDAILTRDHMHAQRFLREVDSASVMVNASTRFADGFEYGLGAEIGISTDKFHARGPVGIEGLTSLKYVVLGEGEVRT.

Belongs to the gamma-glutamyl phosphate reductase family.

It is found in the cytoplasm. It catalyses the reaction L-glutamate 5-semialdehyde + phosphate + NADP(+) = L-glutamyl 5-phosphate + NADPH + H(+). Its pathway is amino-acid biosynthesis; L-proline biosynthesis; L-glutamate 5-semialdehyde from L-glutamate: step 2/2. In terms of biological role, catalyzes the NADPH-dependent reduction of L-glutamate 5-phosphate into L-glutamate 5-semialdehyde and phosphate. The product spontaneously undergoes cyclization to form 1-pyrroline-5-carboxylate. The sequence is that of Gamma-glutamyl phosphate reductase from Delftia acidovorans (strain DSM 14801 / SPH-1).